Consider the following 62-residue polypeptide: Beta-defensin 110 (62 aa).

The signal sequence occupies residues 1-21 (MKIHLFFFILLFWVTILPARS). Intrachain disulfides connect cysteine 32–cysteine 60, cysteine 39–cysteine 53, and cysteine 43–cysteine 61.

The protein belongs to the beta-defensin family.

It is found in the secreted. Has antibacterial activity. In Canis lupus familiaris (Dog), this protein is Beta-defensin 110 (DEFB110).